A 376-amino-acid chain; its full sequence is Erythronate-4-phosphate dehydrogenase (376 aa).

Ser-45 and Thr-66 together coordinate substrate. Residues Asp-146 and Thr-175 each coordinate NAD(+). Residue Arg-209 is part of the active site. Asp-233 contributes to the NAD(+) binding site. Glu-238 is a catalytic residue. His-255 serves as the catalytic Proton donor. Residue Gly-258 coordinates NAD(+). Tyr-259 provides a ligand contact to substrate.

It belongs to the D-isomer specific 2-hydroxyacid dehydrogenase family. PdxB subfamily. As to quaternary structure, homodimer.

The protein resides in the cytoplasm. The catalysed reaction is 4-phospho-D-erythronate + NAD(+) = (R)-3-hydroxy-2-oxo-4-phosphooxybutanoate + NADH + H(+). Its pathway is cofactor biosynthesis; pyridoxine 5'-phosphate biosynthesis; pyridoxine 5'-phosphate from D-erythrose 4-phosphate: step 2/5. Catalyzes the oxidation of erythronate-4-phosphate to 3-hydroxy-2-oxo-4-phosphonooxybutanoate. The protein is Erythronate-4-phosphate dehydrogenase of Baumannia cicadellinicola subsp. Homalodisca coagulata.